A 296-amino-acid polypeptide reads, in one-letter code: Ribosomal RNA small subunit methyltransferase H (296 aa).

Residues 41–43, Asp60, Phe87, Asp103, and Gln110 each bind S-adenosyl-L-methionine; that span reads GGH.

It belongs to the methyltransferase superfamily. RsmH family.

The protein resides in the cytoplasm. It carries out the reaction cytidine(1402) in 16S rRNA + S-adenosyl-L-methionine = N(4)-methylcytidine(1402) in 16S rRNA + S-adenosyl-L-homocysteine + H(+). Functionally, specifically methylates the N4 position of cytidine in position 1402 (C1402) of 16S rRNA. In Synechococcus elongatus (strain ATCC 33912 / PCC 7942 / FACHB-805) (Anacystis nidulans R2), this protein is Ribosomal RNA small subunit methyltransferase H.